The sequence spans 92 residues: Large ribosomal subunit protein bL36m (92 aa).

A mitochondrion-targeting transit peptide spans 1-54; sequence MASLGRKFFAVGVLSRVFPSAFNAQKGLLKNASMFLTPAFRLSPSLLPWNFSRG.

It belongs to the bacterial ribosomal protein bL36 family. In terms of assembly, component of the mitochondrial large ribosomal subunit (mt-LSU). Mature yeast 74S mitochondrial ribosomes consist of a small (37S) and a large (54S) subunit. The 37S small subunit contains a 15S ribosomal RNA (15S mt-rRNA) and at least 32 different proteins. The 54S large subunit contains a 21S rRNA (21S mt-rRNA) and at least 45 different proteins. bL36m has a zinc binding site.

The protein localises to the mitochondrion. Functionally, component of the mitochondrial ribosome (mitoribosome), a dedicated translation machinery responsible for the synthesis of mitochondrial genome-encoded proteins, including at least some of the essential transmembrane subunits of the mitochondrial respiratory chain. The mitoribosomes are attached to the mitochondrial inner membrane and translation products are cotranslationally integrated into the membrane. bL36m may be involved in a process influencing telomere capping. This is Large ribosomal subunit protein bL36m (rtc6) from Schizosaccharomyces pombe (strain 972 / ATCC 24843) (Fission yeast).